Consider the following 89-residue polypeptide: Elongation factor 1-beta (89 aa).

This sequence belongs to the EF-1-beta/EF-1-delta family.

Promotes the exchange of GDP for GTP in EF-1-alpha/GDP, thus allowing the regeneration of EF-1-alpha/GTP that could then be used to form the ternary complex EF-1-alpha/GTP/AAtRNA. This Methanococcus aeolicus (strain ATCC BAA-1280 / DSM 17508 / OCM 812 / Nankai-3) protein is Elongation factor 1-beta.